The primary structure comprises 597 residues: Gigaxonin (597 aa).

Positions 30-99 (CDAHLVLDGE…IFSGQIRLNE (70 aa)) constitute a BTB domain. Residues 134–236 (CIGIRDFALH…DSSYLREQML (103 aa)) enclose the BACK domain. 6 Kelch repeats span residues 274–326 (CIVT…SAEG), 327–374 (FLFV…EIDG), 376–421 (LYIL…AMKK), 422–468 (KIYA…GVAM), 470–522 (LYVF…VYGA), and 528–574 (SIYV…AALR).

In terms of assembly, interacts with TBCB. Interacts with CUL3. Part of a complex that contains CUL3, RBX1 and GAN. Interacts (via BTB domain) with UBA1. Interacts (via Kelch domains) with MAP1B (via C-terminus) and MAP1S (via C-terminus). Ubiquitinated by E3 ubiquitin ligase complex formed by CUL3 and RBX1 and probably targeted for proteasome-independent degradation. In terms of tissue distribution, expressed in brain, heart and muscle.

The protein localises to the cytoplasm. The protein resides in the cytoskeleton. The protein operates within protein modification; protein ubiquitination. Functionally, probable cytoskeletal component that directly or indirectly plays an important role in neurofilament architecture. May act as a substrate-specific adapter of an E3 ubiquitin-protein ligase complex which mediates the ubiquitination and subsequent proteasomal degradation of target proteins. Controls degradation of TBCB. Controls degradation of MAP1B and MAP1S, and is critical for neuronal maintenance and survival. The sequence is that of Gigaxonin (GAN) from Homo sapiens (Human).